The chain runs to 375 residues: N-acetylneuraminate epimerase (375 aa).

The N-terminal stretch at 1 to 22 is a signal peptide; the sequence is MKLTKTALCTALFATFTFSANA. Kelch repeat units lie at residues 43-87, 89-140, 142-176, 177-222, 225-273, 295-344, and 346-375; these read TVYV…AAVD, KLYV…ASHG, KVYILGGSNLSIFNGFFQDNVAAGEDKGKKDEIVA, AYFD…TIQG, LVVV…LAGA, KQFK…SYNN, and VLLIGGETDGGKALTSVKAISYDGKKLTVE. The active-site Proton acceptor is the Glu-231.

It belongs to the NanM family. Homodimer.

The protein resides in the periplasm. The enzyme catalyses N-acetyl-alpha-neuraminate = N-acetyl-beta-neuraminate. Its function is as follows. Converts alpha-N-acetylneuranimic acid (Neu5Ac) to the beta-anomer, accelerating the equilibrium between the alpha- and beta-anomers. Probably facilitates sialidase-negative bacteria to compete successfully for limited amounts of extracellular Neu5Ac, which is likely taken up in the beta-anomer. In addition, the rapid removal of sialic acid from solution might be advantageous to the bacterium to damp down host responses. The protein is N-acetylneuraminate epimerase of Haemophilus influenzae (strain 86-028NP).